Consider the following 125-residue polypeptide: Large ribosomal subunit protein uL22c (125 aa).

The protein belongs to the universal ribosomal protein uL22 family. As to quaternary structure, part of the 50S ribosomal subunit.

It localises to the plastid. The protein localises to the chloroplast. In terms of biological role, this protein binds specifically to 23S rRNA. Its function is as follows. The globular domain of the protein is located near the polypeptide exit tunnel on the outside of the subunit, while an extended beta-hairpin is found that lines the wall of the exit tunnel in the center of the 70S ribosome. The polypeptide is Large ribosomal subunit protein uL22c (rpl22) (Nuphar advena (Common spatterdock)).